Here is a 134-residue protein sequence, read N- to C-terminus: MSWQAYVDDHLMCDIEGHEGHRLTAAAIVGHDGSVWAQSATFPQFKPEEMNGIMTDFNEPGHLAPTGLHLGGTKYMVIQGEAGAVIRGKKGSGGITIKKTGQALVFGIYEEPVTPGQCNMVVERLGDYLLEQGL.

Residues cysteine 13 and cysteine 118 are joined by a disulfide bond. Positions 84–100 (AVIRGKKGSGGITIKKT) match the Involved in PIP2 interaction motif. Position 114 is a phosphothreonine (threonine 114).

It belongs to the profilin family. In terms of assembly, occurs in many kinds of cells as a complex with monomeric actin in a 1:1 ratio. In terms of processing, phosphorylated by MAP kinases.

The protein resides in the cytoplasm. Its subcellular location is the cytoskeleton. In terms of biological role, binds to actin and affects the structure of the cytoskeleton. At high concentrations, profilin prevents the polymerization of actin, whereas it enhances it at low concentrations. By binding to PIP2, it inhibits the formation of IP3 and DG. This chain is Profilin-2 (PRO2), found in Olea europaea (Common olive).